Consider the following 344-residue polypeptide: Melanocyte-stimulating hormone receptor (344 aa).

Over 1–37 the chain is Extracellular; sequence MPMQGAQRKLLGSLNSTPTATSNLGLAANHTGAPCLE. N29 is a glycosylation site (N-linked (GlcNAc...) asparagine). A helical transmembrane segment spans residues 38-63; sequence VSIPDGLFLSLGLVSLVENVLVVAAI. The Cytoplasmic segment spans residues 64 to 72; it reads AKNRNLHSS. Residues 73 to 93 traverse the membrane as a helical segment; it reads MYCFICCLALSDLLVSGSNML. The Extracellular segment spans residues 94–118; that stretch reads ETAIILLLEAGTLATRASVVQQLHN. Residues 119 to 140 traverse the membrane as a helical segment; the sequence is TIDVLTCSSMLCSLCFLGAIAV. Residues 141-163 are Cytoplasmic-facing; sequence DRYISIFYALRYHSIMTLPRAQR. The chain crosses the membrane as a helical span at residues 164–183; it reads AIAAIWVTSVLSSTLFITYY. The Extracellular portion of the chain corresponds to 184–191; it reads DHAAVLLC. A helical transmembrane segment spans residues 192-211; sequence LVVFFLAMLVLMAVLYVHML. The Cytoplasmic portion of the chain corresponds to 212–240; sequence ARACQHAQGIIRLHNRQLPAHKGFGLRGA. The helical transmembrane segment at 241–266 threads the bilayer; it reads ATLTILLGIFFLCWGPFFLHLTLVVF. Residues 267–279 lie on the Extracellular side of the membrane; it reads CPQHLTCNCIFKN. A helical membrane pass occupies residues 280–300; it reads FKVFLTLIICNTIIDPLIYAF. The Cytoplasmic segment spans residues 301–344; it reads RSQELRRTLKEVLLCSWWPGCGAEGGGDSVWPGSCVTLRGPLPP. C315 carries the S-palmitoyl cysteine lipid modification.

Belongs to the G-protein coupled receptor 1 family. In terms of assembly, interacts with MGRN1, but does not undergo MGRN1-mediated ubiquitination; this interaction competes with GNAS-binding and thus inhibits agonist-induced cAMP production. Interacts with OPN3; the interaction results in a decrease in MC1R-mediated cAMP signaling and ultimately a decrease in melanin production in melanocytes.

It localises to the cell membrane. Its function is as follows. Receptor for MSH (alpha, beta and gamma) and ACTH. The activity of this receptor is mediated by G proteins which activate adenylate cyclase. Mediates melanogenesis, the production of eumelanin (black/brown) and phaeomelanin (red/yellow), via regulation of cAMP signaling in melanocytes. The chain is Melanocyte-stimulating hormone receptor (MC1R) from Mico argentatus (Silvery marmoset).